The primary structure comprises 322 residues: Ribose 1,5-bisphosphate isomerase (322 aa).

Residues 20 to 23 (RGAG) and Arg-63 contribute to the substrate site. Residue Cys-133 is the Proton acceptor of the active site. 135-137 (SKA) serves as a coordination point for substrate. Asp-202 serves as the catalytic Proton donor. Substrate-binding positions include 212-213 (NK) and Lys-238.

This sequence belongs to the eIF-2B alpha/beta/delta subunits family. R15P isomerase subfamily. In terms of assembly, homohexamer; trimer of dimers.

It carries out the reaction alpha-D-ribose 1,5-bisphosphate = D-ribulose 1,5-bisphosphate. With respect to regulation, is highly activated in the presence of AMP, with an increase of &gt;40-fold in activity levels. Among other nucleotides, isomerase activity is slightly increased in the presence of GMP, but CMP, UMP, TMP, and NAD(+) have no effect; therefore, AMP is likely the major activator of R15P isomerase in vivo. To a lesser extent, various compounds with an adenosyl moiety, such as dAMP, adenosine, or methylthioadenosine, can also act as activators. The regulation of this enzyme by AMP prevents excess degradation of intracellular AMP by the archaeal AMP degradation pathway. Catalyzes the isomerization of ribose 1,5-bisphosphate (R15P) to ribulose 1,5-bisphosphate (RuBP), the CO(2) acceptor and substrate for RubisCO. Only accepts the alpha-anomer of D-ribose 1,5-bisphosphate as substrate, being inactive on the beta-anomer. Displays a strict substrate specificity, since other phosphorylated sugars such as R5P, ribose, G16P, G6P, G1P, FBP, F6P, and PRPP, are not substrates. Functions in an archaeal AMP degradation pathway, together with AMP phosphorylase and RubisCO. This Thermococcus kodakarensis (strain ATCC BAA-918 / JCM 12380 / KOD1) (Pyrococcus kodakaraensis (strain KOD1)) protein is Ribose 1,5-bisphosphate isomerase.